The sequence spans 265 residues: UDP-N-acetylenolpyruvoylglucosamine reductase (265 aa).

An FAD-binding PCMH-type domain is found at 15–169; sequence GVGGPAELWT…TRVRLKLKER (155 aa). Arginine 149 is an active-site residue. The interval 182–203 is disordered; the sequence is DRARKGQPKRKSAGCAFKNPPG. The Proton donor role is filled by cysteine 196.

The protein belongs to the MurB family. The cofactor is FAD.

The protein localises to the cytoplasm. The catalysed reaction is UDP-N-acetyl-alpha-D-muramate + NADP(+) = UDP-N-acetyl-3-O-(1-carboxyvinyl)-alpha-D-glucosamine + NADPH + H(+). It participates in cell wall biogenesis; peptidoglycan biosynthesis. Functionally, cell wall formation. In Thermus thermophilus (strain ATCC 27634 / DSM 579 / HB8), this protein is UDP-N-acetylenolpyruvoylglucosamine reductase.